The sequence spans 674 residues: Sodium/myo-inositol cotransporter 2 (674 aa).

Residues 1–27 are Extracellular-facing; it reads MESSTSSPQPPLSDPLDPFPQRSLEPG. Residues 28–48 traverse the membrane as a helical segment; sequence DIAVLVLYFLFVLAVGLWSTV. Residues 49–56 lie on the Cytoplasmic side of the membrane; the sequence is KTKRDTVK. The chain crosses the membrane as a helical span at residues 57 to 77; that stretch reads GYFLAGGDMVWWPVGASLFAS. Topologically, residues 78–102 are extracellular; it reads NVGSGHFVGLAGSGAATGISVAAYE. A helical membrane pass occupies residues 103 to 123; the sequence is FNGMFSVLMLAWIFLPIYIAG. Topologically, residues 124–140 are cytoplasmic; that stretch reads QVTTMPEYLRRRFGGSR. A helical transmembrane segment spans residues 141–161; that stretch reads IAITLAVLYLFIYIFTKISVD. At 162-180 the chain is on the extracellular side; sequence MYAGAIFIQQSLHLDLYLS. A helical transmembrane segment spans residues 181–201; it reads VVGLLAVTALYTVAGGLAAVI. Residues 202–208 are Cytoplasmic-facing; that stretch reads YTDALQT. The chain crosses the membrane as a helical span at residues 209-229; sequence LIMLVGALTLMGYSFAAVGGM. The Extracellular segment spans residues 230 to 272; that stretch reads EGLQEKYFLALPSNRSENSSCGLPREDAFHLFRDPLTSDLPWP. Residues 273–293 form a helical membrane-spanning segment; that stretch reads GILFGMSIPSLWYWCTDQVIV. The Cytoplasmic portion of the chain corresponds to 294 to 308; that stretch reads QRSLAAKNLSHAKGG. The helical transmembrane segment at 309-329 threads the bilayer; sequence SLMAAYLKVLPLFIMVFPGMV. Residues 330–375 lie on the Extracellular side of the membrane; it reads SRILFPDQVACADPETCQRVCNNPSGCSDIAYPKLVLELLPTGLRG. The chain crosses the membrane as a helical span at residues 376 to 396; sequence LMMAVMVAALMSSLTSIFNSA. The Cytoplasmic segment spans residues 397 to 418; the sequence is STIFTMDLWNHVRPRASEKELM. A helical membrane pass occupies residues 419–439; it reads IVGRVFVLLLVLVSVLWIPVV. The Extracellular segment spans residues 440-446; sequence QASQGGQ. The chain crosses the membrane as a helical span at residues 447–467; sequence LFVYIQAISSYLQPPVAMVFV. Over 468–479 the chain is Cytoplasmic; it reads LGCFWKRANEKG. Residues 480–500 form a helical membrane-spanning segment; the sequence is AFWGLVLGLLLGFIRLILDFI. The Extracellular portion of the chain corresponds to 501 to 521; sequence YVEPACHQPDERPSVVKNVHY. The chain crosses the membrane as a helical span at residues 522 to 542; that stretch reads LYFSMILSSVTVLTVTVMSLL. Topologically, residues 543-653 are cytoplasmic; it reads TEPPSKEMIS…SIEENPVVKT (111 aa). Residues 654 to 674 form a helical membrane-spanning segment; sequence LLDVNCLLCICCAFFLWGYFA.

The protein belongs to the sodium:solute symporter (SSF) (TC 2.A.21) family. In terms of tissue distribution, expressed in brain, lung and kidney. In the kidney, strongly expressed in the cortex, at the luminal side of proximal convoluted tubules and in BBMVs. Weaker expression observed in the medulla (at protein level).

Its subcellular location is the membrane. It is found in the apical cell membrane. It carries out the reaction myo-inositol(out) + 2 Na(+)(out) = myo-inositol(in) + 2 Na(+)(in). The catalysed reaction is 1D-chiro-inositol(out) + 2 Na(+)(out) = 1D-chiro-inositol(in) + 2 Na(+)(in). It catalyses the reaction D-glucose(out) + 2 Na(+)(out) = D-glucose(in) + 2 Na(+)(in). The enzyme catalyses D-xylose(out) + 2 Na(+)(out) = D-xylose(in) + 2 Na(+)(in). With respect to regulation, MI transport activity stimulated five-fold under 24 hour hypertonic shock conditions. MI inward currents were gradually inhibited as increasing amounts of phlorizin were added to the superfusion medium. When sodium is replaced by potassium, MI uptake is dramatically reduced and in the presence of L-fucose or D-chiro-inositol (DCI), the specific accumulation of tracer amounts of MI is also reduced. Involved in the sodium-dependent cotransport of myo-inositol (MI) with a Na(+):MI stoichiometry of 2:1. Exclusively responsible for apical MI transport and absorption in intestine. Can also transport D-chiro-inositol (DCI) but not L-fucose. Exhibits stereospecific cotransport of both D-glucose and D-xylose. May induce apoptosis through the TNF-alpha, PDCD1 pathway. May play a role in the regulation of MI concentration in serum, involving reabsorption in at least the proximal tubule of the kidney. The sequence is that of Sodium/myo-inositol cotransporter 2 from Oryctolagus cuniculus (Rabbit).